We begin with the raw amino-acid sequence, 503 residues long: Long-chain-aldehyde dehydrogenase (503 aa).

Residue 218–224 (GYGAEVG) coordinates NAD(+). Catalysis depends on residues Glu262 and Cys301.

It belongs to the aldehyde dehydrogenase family. As to quaternary structure, homotetramer.

It catalyses the reaction a long-chain fatty aldehyde + NAD(+) + H2O = a long-chain fatty acid + NADH + 2 H(+). Its activity is regulated as follows. Completely inhibited by p-chloromercuribenzoate and N-ethylmaleimide. Strongly inhibited by iodoacetate. Inhibited by Pb(2+), Fe(3+), Ag(+) and Hg(2+) and partially inhibited by several other metal ions Mn(2+), Zn(2+) and Cu(2+). Its function is as follows. Aldehyde dehydrogenase that shows activity toward n-alkanals (C(4) to C(14)), with a preference for longer carbon chains. The best substrate is tetradecanal. The polypeptide is Long-chain-aldehyde dehydrogenase (ald1) (Acinetobacter sp).